Consider the following 787-residue polypeptide: MEQNYTKIDHELPLIPLRGLAIFPYMILNFDIGREISLKALDQAMMDEELIFLTSQKEAEVDEPGEEDFYHVGTICKVKQMIKLPGDTVRVLVEGVSRGRVKKIEQEDGYFRAVIEEIVFDSDNLDSETEVEIEAFVRNVFDAFEEYINIGNRVSPEILISLADIEDVDRFIDTIAANIYLKSSQKQEILEEFDIRKRLELIYSILLEEIDILKIEKKITLRVKKQMNKVQKEYYLREQLKAIQKELGEEEDINSEADEYREKLKKIKAPKTTKEKIEKEIDKFSKISSMSPDVSVSRNYLDTIFSLPWNKETKDKLDITKAKDILDEDHYGLEKVKERILEYLAIRTLAKSLKGPIICLVGPPGTGKTSIVKSIARALNRKFVRISLGGVRDEAEIRGHRRTYVGSIPGRIINGVKEAQTKNPVFLFDEIDKMAADYKGDPASAMLEVLDPEQNKDFVDHYLEIPFDLSKILFVTTANSLGNIPRPLLDRMEVIEVSGYIEEEKLNIAKKYLLPKQIKEHALKENFIKIDDETLRSIINHYTREAGVRTLERTIGKICRKVAKKYVEDPTLEEVVINKSDLETYLGKDMFKYQLAEVNPQIGLVNGLAWTEVGGVTLEVEVNVLKGKGEIVLTGKLGDVMKESAKTGISYIRSIVDKFDIDPEFYKTNDIHIHIPEGAVPKDGPSAGITMALAVISALTKRPVPGNIAMTGEITLRGRVLAVGGVKEKLLAAHRAGITKVLIPKECEADLDEIPENVKEKMEFVLVEHMDEVLEQALLKSGENNEN.

The Lon N-terminal domain maps to 12 to 210; it reads LPLIPLRGLA…LIYSILLEEI (199 aa). Position 362-369 (362-369) interacts with ATP; the sequence is GPPGTGKT. The Lon proteolytic domain maps to 599 to 780; sequence NPQIGLVNGL…DEVLEQALLK (182 aa). Active-site residues include S686 and K729.

Belongs to the peptidase S16 family. In terms of assembly, homohexamer. Organized in a ring with a central cavity.

It is found in the cytoplasm. It catalyses the reaction Hydrolysis of proteins in presence of ATP.. In terms of biological role, ATP-dependent serine protease that mediates the selective degradation of mutant and abnormal proteins as well as certain short-lived regulatory proteins. Required for cellular homeostasis and for survival from DNA damage and developmental changes induced by stress. Degrades polypeptides processively to yield small peptide fragments that are 5 to 10 amino acids long. Binds to DNA in a double-stranded, site-specific manner. The sequence is that of Lon protease from Clostridioides difficile (strain 630) (Peptoclostridium difficile).